The sequence spans 384 residues: tRNA-specific 2-thiouridylase MnmA (384 aa).

Residues 9 to 16 (GMSGGVDS) and methionine 35 each bind ATP. An interaction with target base in tRNA region spans residues 95–97 (NPD). The Nucleophile role is filled by cysteine 100. An intrachain disulfide couples cysteine 100 to cysteine 196. Glycine 124 contributes to the ATP binding site. The interaction with tRNA stretch occupies residues 146–148 (KDQ). Cysteine 196 serves as the catalytic Cysteine persulfide intermediate. The segment at 308-309 (RY) is interaction with tRNA.

Belongs to the MnmA/TRMU family.

It is found in the cytoplasm. It carries out the reaction S-sulfanyl-L-cysteinyl-[protein] + uridine(34) in tRNA + AH2 + ATP = 2-thiouridine(34) in tRNA + L-cysteinyl-[protein] + A + AMP + diphosphate + H(+). Functionally, catalyzes the 2-thiolation of uridine at the wobble position (U34) of tRNA, leading to the formation of s(2)U34. In Burkholderia ambifaria (strain ATCC BAA-244 / DSM 16087 / CCUG 44356 / LMG 19182 / AMMD) (Burkholderia cepacia (strain AMMD)), this protein is tRNA-specific 2-thiouridylase MnmA.